The following is a 217-amino-acid chain: Guanylate kinase (217 aa).

In terms of domain architecture, Guanylate kinase-like spans 10-190 (GLLIILSSPS…TEEALKTIIT (181 aa)). An ATP-binding site is contributed by 17–24 (SPSGAGKS).

The protein belongs to the guanylate kinase family.

The protein resides in the cytoplasm. It catalyses the reaction GMP + ATP = GDP + ADP. Functionally, essential for recycling GMP and indirectly, cGMP. The polypeptide is Guanylate kinase (Ruegeria sp. (strain TM1040) (Silicibacter sp.)).